The chain runs to 485 residues: Cytosol non-specific dipeptidase (485 aa).

Residue H76 participates in Zn(2+) binding. The active site involves D78. D115 is a Zn(2+) binding site. E145 serves as the catalytic Proton acceptor. The Zn(2+) site is built by E146 and D169. Residue K296 is modified to N6-acetyllysine. Residue H457 coordinates Zn(2+).

Belongs to the peptidase M20C family. It depends on Zn(2+) as a cofactor. The cofactor is Co(2+).

The enzyme catalyses Hydrolysis of dipeptides, preferentially hydrophobic dipeptides including prolyl amino acids.. Inhibited by metal chelators. Its function is as follows. Dipeptidase with broad substrate specificity. Requires dipeptide substrates with an unblocked N-terminus and the amino group in the alpha or beta position. Non-protein amino acids and proline are not accepted in the C-terminal position, whereas some dipeptide amides and formyl amino acids are hydrolyzed. Also shows cysteinylglycinase activity, which is sufficient for E.coli to utilize cysteinylglycine as a cysteine source. This is Cytosol non-specific dipeptidase (pepD) from Escherichia coli (strain K12).